Reading from the N-terminus, the 347-residue chain is Heme A synthase (347 aa).

8 consecutive transmembrane segments (helical) span residues 14-34 (VKIW…IGGI), 96-116 (FHRL…LYFM), 129-149 (FILI…MVKS), 162-182 (LAMH…HFLL), 199-219 (VFYI…LVAG), 260-280 (FIHE…LLVL), 287-307 (MYLL…TFIY), and 311-331 (IILA…SIYL). H262 is a heme binding site. H317 contributes to the heme binding site.

The protein belongs to the COX15/CtaA family. Type 2 subfamily. As to quaternary structure, interacts with CtaB. Heme b serves as cofactor.

Its subcellular location is the cell membrane. It catalyses the reaction Fe(II)-heme o + 2 A + H2O = Fe(II)-heme a + 2 AH2. It functions in the pathway porphyrin-containing compound metabolism; heme A biosynthesis; heme A from heme O: step 1/1. In terms of biological role, catalyzes the conversion of heme O to heme A by two successive hydroxylations of the methyl group at C8. The first hydroxylation forms heme I, the second hydroxylation results in an unstable dihydroxymethyl group, which spontaneously dehydrates, resulting in the formyl group of heme A. This chain is Heme A synthase, found in Ehrlichia ruminantium (strain Welgevonden).